The primary structure comprises 101 residues: Small ribosomal subunit protein bS6 (101 aa).

The protein belongs to the bacterial ribosomal protein bS6 family.

Its function is as follows. Binds together with bS18 to 16S ribosomal RNA. This Staphylococcus saprophyticus subsp. saprophyticus (strain ATCC 15305 / DSM 20229 / NCIMB 8711 / NCTC 7292 / S-41) protein is Small ribosomal subunit protein bS6.